We begin with the raw amino-acid sequence, 545 residues long: Chaperonin GroEL 2 (545 aa).

ATP-binding positions include 29–32 (TLGP), 86–90 (DGTTT), G413, 479–481 (NAA), and D495.

This sequence belongs to the chaperonin (HSP60) family. Forms a cylinder of 14 subunits composed of two heptameric rings stacked back-to-back. Interacts with the co-chaperonin GroES.

It is found in the cytoplasm. The catalysed reaction is ATP + H2O + a folded polypeptide = ADP + phosphate + an unfolded polypeptide.. Functionally, together with its co-chaperonin GroES, plays an essential role in assisting protein folding. The GroEL-GroES system forms a nano-cage that allows encapsulation of the non-native substrate proteins and provides a physical environment optimized to promote and accelerate protein folding. The sequence is that of Chaperonin GroEL 2 from Prochlorococcus marinus (strain MIT 9312).